A 485-amino-acid chain; its full sequence is GlcNAc-binding protein A (485 aa).

Positions 1–23 (MKKQPKMTAIALILSGISGLAYG) are cleaved as a signal peptide. The 178-residue stretch at 24 to 201 (HGYVSAVENG…SFYNVIDVKF (178 aa)) folds into the Chitin-binding type-4 domain. One can recognise a Chitin-binding type-3 domain in the interval 437–478 (AGTKVLASDGAIYQCKPWPYSGYCQQWTSNATQYQPGTGSHW).

It belongs to the GbpA family.

The protein localises to the secreted. In terms of biological role, probably interacts with GlcNAc residues. May promote attachment to both epithelial cell surfaces and chitin. This Vibrio cholerae serotype O1 (strain ATCC 39541 / Classical Ogawa 395 / O395) protein is GlcNAc-binding protein A.